The sequence spans 304 residues: Olfactory receptor 8G2 (304 aa).

Residues 1-41 (MVFLSSVETDQRKMSAGNHSSVTEFILAGLSEQPELQLRLF) are Extracellular-facing. Asparagine 18 carries N-linked (GlcNAc...) asparagine glycosylation. A helical membrane pass occupies residues 42–62 (LLFLGIYVVTVVGNLSMITLI). Over 63-69 (GLSSHLH) the chain is Cytoplasmic. The helical transmembrane segment at 70 to 90 (TPMYYFLSGLSFIDLCHSTII) threads the bilayer. At 91–110 (TPKMLVNFVTEKNIISYPEC) the chain is on the extracellular side. A disulfide bridge connects residues cysteine 110 and cysteine 192. Residues 111-130 (MTQLYFFLIFAIAECHMLAV) form a helical membrane-spanning segment. Residues 131–154 (TAYDRYVAICSPLLYNVIMSYHHC) lie on the Cytoplasmic side of the membrane. Residues 155 to 175 (FWLTVGVYVLGILGSTIHTGF) form a helical membrane-spanning segment. Residues 176–193 (MLRLFLCKTNVINHYFCD) are Extracellular-facing. The chain crosses the membrane as a helical span at residues 194 to 214 (LFPLLGLSCSSTYINELLVLV). Residues 215–217 (LSA) are Cytoplasmic-facing. Residues 218–238 (FNILTPALTILASYIFIIASI) form a helical membrane-spanning segment. Over 239 to 257 (LRIRSTEGRSKAFSTCSSH) the chain is Extracellular. A helical membrane pass occupies residues 258 to 278 (ILAVAVFFGSAAFMYLQPSSV). The Cytoplasmic portion of the chain corresponds to 279-304 (SSMDQRKVSSVFYTTIVPMLNPQSIA).

Belongs to the G-protein coupled receptor 1 family.

It localises to the cell membrane. Odorant receptor. The sequence is that of Olfactory receptor 8G2 from Homo sapiens (Human).